The sequence spans 477 residues: ATP synthase subunit beta (477 aa).

163–170 lines the ATP pocket; sequence GGAGVGKT.

It belongs to the ATPase alpha/beta chains family. In terms of assembly, F-type ATPases have 2 components, CF(1) - the catalytic core - and CF(0) - the membrane proton channel. CF(1) has five subunits: alpha(3), beta(3), gamma(1), delta(1), epsilon(1). CF(0) has four main subunits: a(1), b(1), b'(1) and c(9-12).

It localises to the cellular thylakoid membrane. It carries out the reaction ATP + H2O + 4 H(+)(in) = ADP + phosphate + 5 H(+)(out). Its function is as follows. Produces ATP from ADP in the presence of a proton gradient across the membrane. The catalytic sites are hosted primarily by the beta subunits. The sequence is that of ATP synthase subunit beta from Synechococcus sp. (strain JA-2-3B'a(2-13)) (Cyanobacteria bacterium Yellowstone B-Prime).